Reading from the N-terminus, the 204-residue chain is Tat proofreading chaperone DmsD (204 aa).

The protein belongs to the TorD/DmsD family. DmsD subfamily.

Functionally, required for biogenesis/assembly of DMSO reductase, but not for the interaction of the DmsA signal peptide with the Tat system. May be part of a chaperone cascade complex that facilitates a folding-maturation pathway for the substrate protein. In Escherichia coli O157:H7, this protein is Tat proofreading chaperone DmsD.